The chain runs to 216 residues: Ribose-5-phosphate isomerase A (216 aa).

Residues 26–29 (TGST), 79–82 (DGAD), and 92–95 (KGGG) each bind substrate. E101 serves as the catalytic Proton acceptor. K119 is a binding site for substrate.

Belongs to the ribose 5-phosphate isomerase family. Homodimer.

The catalysed reaction is aldehydo-D-ribose 5-phosphate = D-ribulose 5-phosphate. The protein operates within carbohydrate degradation; pentose phosphate pathway; D-ribose 5-phosphate from D-ribulose 5-phosphate (non-oxidative stage): step 1/1. Catalyzes the reversible conversion of ribose-5-phosphate to ribulose 5-phosphate. The sequence is that of Ribose-5-phosphate isomerase A from Legionella pneumophila (strain Lens).